Consider the following 340-residue polypeptide: MNKYWTLVLLLSILVVLALTFYFFTPLLDGIVMGVVFAYVAKPVKRKIEHVGRIKASVIATAIVILPISVLMFYGLIQGLNQAIYLITHYKVIESGILNILSKMGIEEGEEYVKWITSNVFSILQSSIQPSAVEITKKATLLILNFFISIVVCFYALADMENFVRRTTSVVPEDRRDEFRRFVEEIDVTFESLWFGNFVVAILIGLVSLPFFLYFNVPFAPLLSGLMFLAALIPIFAEWMIILPVSLYLLLVDVGRGLSFLLIGVVFLYVLPELILRPYFVGYTSKIHPLVLMLAFIGGGLVGGISGFFIAPMIVGLATAIYNYYTKEELATENHDPESV.

Transmembrane regions (helical) follow at residues 7–27, 57–77, 140–160, 193–213, 225–245, 260–280, and 290–310; these read LVLL…FTPL, SVIA…YGLI, TLLI…LADM, LWFG…PFFL, GLMF…ILPV, FLLI…RPYF, and LVLM…GFFI.

Belongs to the autoinducer-2 exporter (AI-2E) (TC 2.A.86) family.

It is found in the cell membrane. This Archaeoglobus fulgidus (strain ATCC 49558 / DSM 4304 / JCM 9628 / NBRC 100126 / VC-16) protein is Putative transport protein AF_1800.